Here is a 206-residue protein sequence, read N- to C-terminus: Small ribosomal subunit protein uS4 (206 aa).

The region spanning 96 to 156 (GRLDNVVYRM…EKAKQQARIK (61 aa)) is the S4 RNA-binding domain.

This sequence belongs to the universal ribosomal protein uS4 family. As to quaternary structure, part of the 30S ribosomal subunit. Contacts protein S5. The interaction surface between S4 and S5 is involved in control of translational fidelity.

Functionally, one of the primary rRNA binding proteins, it binds directly to 16S rRNA where it nucleates assembly of the body of the 30S subunit. With S5 and S12 plays an important role in translational accuracy. In Vibrio campbellii (strain ATCC BAA-1116), this protein is Small ribosomal subunit protein uS4.